The chain runs to 227 residues: MSASTTSLEEYQKTFLELGLECKALRFGSFKLNSGRQSPYFFNLSLFNSGKLLANLATAYATAIIQSELKFDVIFGPAYKGIPLAAIVCVKLAEIGGTKFQGIQYAFNRKKVKDHGEGGIIVGASLEDKRVLIIDDVMTAGTAINEAFEIISIAQGRVVGCIVALDRQEVIHESDPERTSATQSVSKRYNVPVLSIVSLTQVVQFMGNRLSPEQKSAIENYRKAYGI.

41–42 (FF) lines the orotate pocket. 5-phospho-alpha-D-ribose 1-diphosphate is bound by residues 79 to 80 (YK), arginine 109, lysine 110, lysine 113, histidine 115, and 135 to 143 (DDVMTAGTA). 2 residues coordinate orotate: threonine 139 and arginine 167.

Belongs to the purine/pyrimidine phosphoribosyltransferase family. PyrE subfamily. In terms of assembly, homodimer.

It carries out the reaction orotidine 5'-phosphate + diphosphate = orotate + 5-phospho-alpha-D-ribose 1-diphosphate. Its pathway is pyrimidine metabolism; UMP biosynthesis via de novo pathway; UMP from orotate: step 1/2. Functionally, catalyzes the transfer of a ribosyl phosphate group from 5-phosphoribose 1-diphosphate to orotate, leading to the formation of orotidine monophosphate (OMP). This is Orotate phosphoribosyltransferase 2 (URA10) from Saccharomyces cerevisiae (strain ATCC 204508 / S288c) (Baker's yeast).